The primary structure comprises 173 residues: Large ribosomal subunit protein uL10 (173 aa).

The protein belongs to the universal ribosomal protein uL10 family. Part of the ribosomal stalk of the 50S ribosomal subunit. The N-terminus interacts with L11 and the large rRNA to form the base of the stalk. The C-terminus forms an elongated spine to which L12 dimers bind in a sequential fashion forming a multimeric L10(L12)X complex.

Its function is as follows. Forms part of the ribosomal stalk, playing a central role in the interaction of the ribosome with GTP-bound translation factors. The sequence is that of Large ribosomal subunit protein uL10 from Beutenbergia cavernae (strain ATCC BAA-8 / DSM 12333 / CCUG 43141 / JCM 11478 / NBRC 16432 / NCIMB 13614 / HKI 0122).